The chain runs to 177 residues: ATP synthase subunit delta (177 aa).

This sequence belongs to the ATPase delta chain family. F-type ATPases have 2 components, F(1) - the catalytic core - and F(0) - the membrane proton channel. F(1) has five subunits: alpha(3), beta(3), gamma(1), delta(1), epsilon(1). F(0) has three main subunits: a(1), b(2) and c(10-14). The alpha and beta chains form an alternating ring which encloses part of the gamma chain. F(1) is attached to F(0) by a central stalk formed by the gamma and epsilon chains, while a peripheral stalk is formed by the delta and b chains.

Its subcellular location is the cell inner membrane. Functionally, f(1)F(0) ATP synthase produces ATP from ADP in the presence of a proton or sodium gradient. F-type ATPases consist of two structural domains, F(1) containing the extramembraneous catalytic core and F(0) containing the membrane proton channel, linked together by a central stalk and a peripheral stalk. During catalysis, ATP synthesis in the catalytic domain of F(1) is coupled via a rotary mechanism of the central stalk subunits to proton translocation. Its function is as follows. This protein is part of the stalk that links CF(0) to CF(1). It either transmits conformational changes from CF(0) to CF(1) or is implicated in proton conduction. This is ATP synthase subunit delta from Herminiimonas arsenicoxydans.